The primary structure comprises 410 residues: MAKKKEFRQAEVNIGMVGHVDHGKTTLTKALTGIWTDTHSEELRRGITIKIGFADAEIRKCPHCGKYSTSPVCPYCGHETEFERRVSFIDAPGHEALMTTMLAGASLMDGAVLVIAANEGVMPQTREHLMALQIVGNRNIVIALNKIELVDREKVMERYQEIKEFVKGTVAENAPIIPISALHGANVDVLLAAIEEFIPTPKRDPNKPPKMLVLRSFDVNKPGTPPEKLVGGVIGGSIVQGKLRVGDEIEIRPGVPYEEHGRIKYEPITTEITSLQAGGRFVEEAYPGGLVGVGTKLDPFLTKGDLMAGNVVGKPGQLPPVWDELTLEVHLLERVVGTEEELRVEPIKRREVLLLNVGTARTMGLVTGLGKDTVELKLQIPVCAEVGDRVAISRQVGSRWRLIGYGFIRE.

The tr-type G domain occupies 9-202 (QAEVNIGMVG…AIEEFIPTPK (194 aa)). Positions 18 to 25 (GHVDHGKT) are G1. Mg(2+) is bound by residues Asp-21, Thr-25, Gly-46, and Thr-48. A GTP-binding site is contributed by 21-26 (DHGKTT). Positions 46-50 (GITIK) are G2. Zn(2+) is bound by residues Cys-61, Cys-64, Cys-73, and Cys-76. The segment at 90–93 (DAPG) is G3. Residues 145–148 (NKIE) and 180–182 (SAL) each bind GTP. The tract at residues 145–148 (NKIE) is G4. Residues 180-182 (SAL) are G5.

This sequence belongs to the TRAFAC class translation factor GTPase superfamily. Classic translation factor GTPase family. EIF2G subfamily. As to quaternary structure, heterotrimer composed of an alpha, a beta and a gamma chain. The cofactor is Mg(2+).

It catalyses the reaction GTP + H2O = GDP + phosphate + H(+). Its function is as follows. eIF-2 functions in the early steps of protein synthesis by forming a ternary complex with GTP and initiator tRNA. The protein is Translation initiation factor 2 subunit gamma of Thermococcus kodakarensis (strain ATCC BAA-918 / JCM 12380 / KOD1) (Pyrococcus kodakaraensis (strain KOD1)).